The following is a 288-amino-acid chain: Bifunctional protein FolD (288 aa).

Residues 166–168 (GAS) and I232 contribute to the NADP(+) site.

This sequence belongs to the tetrahydrofolate dehydrogenase/cyclohydrolase family. As to quaternary structure, homodimer.

The enzyme catalyses (6R)-5,10-methylene-5,6,7,8-tetrahydrofolate + NADP(+) = (6R)-5,10-methenyltetrahydrofolate + NADPH. The catalysed reaction is (6R)-5,10-methenyltetrahydrofolate + H2O = (6R)-10-formyltetrahydrofolate + H(+). It participates in one-carbon metabolism; tetrahydrofolate interconversion. Its function is as follows. Catalyzes the oxidation of 5,10-methylenetetrahydrofolate to 5,10-methenyltetrahydrofolate and then the hydrolysis of 5,10-methenyltetrahydrofolate to 10-formyltetrahydrofolate. The chain is Bifunctional protein FolD from Acidithiobacillus ferrooxidans (strain ATCC 23270 / DSM 14882 / CIP 104768 / NCIMB 8455) (Ferrobacillus ferrooxidans (strain ATCC 23270)).